Reading from the N-terminus, the 828-residue chain is Putative dual specificity tyrosine-phosphorylation-regulated kinase 3 homolog (828 aa).

The span at 1 to 14 (MVGSQEKKNNHIEL) shows a compositional bias: basic and acidic residues. The disordered stretch occupies residues 1-26 (MVGSQEKKNNHIELSETPATDKNNLN). The span at 17-26 (TPATDKNNLN) shows a compositional bias: polar residues. Residues 276–589 (YEMLKIIGKG…PSEALKHPWL (314 aa)) enclose the Protein kinase domain. ATP is bound by residues 282 to 290 (IGKGSFGQV) and Lys305. Catalysis depends on Asp402, which acts as the Proton acceptor. A Phosphoserine modification is found at Ser616.

Belongs to the protein kinase superfamily. CMGC Ser/Thr protein kinase family. MNB/DYRK subfamily. In terms of processing, autophosphorylated on tyrosine residues.

The catalysed reaction is L-seryl-[protein] + ATP = O-phospho-L-seryl-[protein] + ADP + H(+). It catalyses the reaction L-threonyl-[protein] + ATP = O-phospho-L-threonyl-[protein] + ADP + H(+). The enzyme catalyses L-tyrosyl-[protein] + ATP = O-phospho-L-tyrosyl-[protein] + ADP + H(+). The protein is Putative dual specificity tyrosine-phosphorylation-regulated kinase 3 homolog (Dyrk3) of Drosophila melanogaster (Fruit fly).